A 241-amino-acid polypeptide reads, in one-letter code: Alpha/beta-tubulin-N-acetyltransferase 9 (241 aa).

The N-acetyltransferase domain maps to 34–181; that stretch reads EELRHLTASE…VTLRLAVSEP (148 aa).

The protein belongs to the acetyltransferase family. GNAT subfamily.

The enzyme catalyses N-terminal L-methionyl-[tubulin] + acetyl-CoA = N-terminal N(alpha)-acetyl-L-methionyl-[tubulin] + CoA + H(+). N-acetyltransferase that mediates the acetylation of the N-terminal residues of alpha- and beta-tubulin. In Mus musculus (Mouse), this protein is Alpha/beta-tubulin-N-acetyltransferase 9 (Nat9).